The chain runs to 508 residues: DNA-directed RNA polymerase subunit Rpo1C (508 aa).

The interval 1–123 is unknown; that stretch reads MIIWKDTAKN…REKYEYEKKV (123 aa). The interval 124-508 is DNA-directed RNA polymerase subunit Rpo1C; that stretch reads SSQVLDVIAE…IYKGYPKTKK (385 aa).

This sequence belongs to the RNA polymerase beta' chain family. As to quaternary structure, part of the RNA polymerase complex.

The protein localises to the cytoplasm. The enzyme catalyses RNA(n) + a ribonucleoside 5'-triphosphate = RNA(n+1) + diphosphate. In terms of biological role, DNA-dependent RNA polymerase (RNAP) catalyzes the transcription of DNA into RNA using the four ribonucleoside triphosphates as substrates. Forms part of the jaw domain. This Thermoplasma volcanium (strain ATCC 51530 / DSM 4299 / JCM 9571 / NBRC 15438 / GSS1) protein is DNA-directed RNA polymerase subunit Rpo1C.